The following is a 459-amino-acid chain: Endoglucanase EG-1 (459 aa).

Positions 1-22 (MAPSVTLPLTTAILAIARLVAA) are cleaved as a signal peptide. At Q23 the chain carries Pyrrolidone carboxylic acid. Positions 23-397 (QQPGTSTPEV…DIGSTTNSTA (375 aa)) are catalytic. Cystine bridges form between C41–C47, C71–C92, C82–C88, C161–C360, C193–C216, C197–C215, C236–C241, and C246–C315. The N-linked (GlcNAc) asparagine glycan is linked to N78. An N-linked (GlcNAc...) (high mannose) asparagine glycan is attached at N204. E218 (nucleophile) is an active-site residue. The active-site Proton donor/acceptor is the E223. The interval 390 to 425 (GSTTNSTAPPPPPASSTTFSTTRRSSTTSSSPSCTQ) is disordered. An N-linked (GlcNAc...) asparagine glycan is attached at N394. Positions 398–423 (PPPPPASSTTFSTTRRSSTTSSSPSC) are linker. Low complexity predominate over residues 404–425 (SSTTFSTTRRSSTTSSSPSCTQ). Cystine bridges form between C423–C439, C431–C448, and C442–C458. The region spanning 423–459 (CTQTHWGQCGGIGYSGCKTCTSGTTCQYSNDYYSQCL) is the CBM1 domain.

The protein belongs to the glycosyl hydrolase 7 (cellulase C) family. In terms of processing, asn-204 contains mainly a high-mannose-type glycan (Hex(7-9)GlcNAc(2)), with a small fraction (8%) bearing a single GlcNAc at this site.

The protein resides in the secreted. It carries out the reaction Endohydrolysis of (1-&gt;4)-beta-D-glucosidic linkages in cellulose, lichenin and cereal beta-D-glucans.. Its function is as follows. Endoglucanase (EG) that cleaves the internal beta-1,4-glucosidic bonds in cellulose. The degradation of cellulose involves an interplay between different cellulolytic enzymes. Hydrolysis starts with EGs, which cut internal glycosidic linkages to reduce the polymerization degree of the substrate and creates new chain ends for exocellobiohydrolases (CBHs). The CBH release the disaccharide cellobiose from the non-reducing end of the cellulose polymer chain. Finally, beta-1,4-glucosidases hydrolyze the cellobiose and other short cello-oligosaccharides into glucose units. The protein is Endoglucanase EG-1 (egl1) of Hypocrea jecorina (Trichoderma reesei).